A 217-amino-acid chain; its full sequence is Somatotropin (217 aa).

A signal peptide spans 1-26; sequence MATGSRTSLLLAFTLLCLPQLKEAGA. Histidine 44 provides a ligand contact to Zn(2+). Cysteines 79 and 191 form a disulfide. Serine 132 is modified (phosphoserine). Glutamate 200 is a Zn(2+) binding site. Cysteine 208 and cysteine 215 are disulfide-bonded.

This sequence belongs to the somatotropin/prolactin family.

The protein localises to the secreted. In terms of biological role, plays an important role in growth control. Its major role in stimulating body growth is to stimulate the liver and other tissues to secrete IGF1. It stimulates both the differentiation and proliferation of myoblasts. It also stimulates amino acid uptake and protein synthesis in muscle and other tissues. The protein is Somatotropin (GH1) of Saimiri boliviensis boliviensis (Bolivian squirrel monkey).